The primary structure comprises 947 residues: Pyruvate, phosphate dikinase 1, chloroplastic (947 aa).

A chloroplast-targeting transit peptide spans 1 to 71 (MPSVSRAVCV…PLRAVAAPIP (71 aa)). The disordered stretch occupies residues 39–60 (RHGKPEVAIRSGSGGSARGGHC). Thr-527 carries the post-translational modification Phosphothreonine; by PDRP1. His-529 (tele-phosphohistidine intermediate) is an active-site residue. Substrate-binding residues include Arg-635, Arg-692, Glu-821, Gly-842, Thr-843, Asn-844, and Asp-845. Glu-821 lines the Mg(2+) pocket. Asp-845 lines the Mg(2+) pocket. Cys-907 acts as the Proton donor in catalysis.

It belongs to the PEP-utilizing enzyme family. In terms of assembly, homotetramer. Mg(2+) serves as cofactor. In terms of processing, phosphorylation of Thr-527 in the dark inactivates the enzyme. Dephosphorylation upon light stimulation reactivates the enzyme. Phosphorylation increases during the first 20 days post-pollination and then remains constant through the 40-day mature seed stage. Reactivation by dephosphorylation during germination is negligible. Isoform 1 is only expressed in green leaves. Isoform 2 is found in roots, stems, rachis branches, leaf sheaths, green leaves and spikelets. The non-phosphorylated PPDK in mature seeds is endosperm-localized.

Its subcellular location is the plastid. The protein localises to the chloroplast. The protein resides in the cytoplasm. The catalysed reaction is pyruvate + phosphate + ATP = phosphoenolpyruvate + AMP + diphosphate + H(+). Activated by light-induced dephosphorylation. Inhibited by dark-induced phosphorylation. Both reactions are catalyzed by PDRP1. Functionally, formation of phosphoenolpyruvate. The cytoplasmic isoform supports the biosynthetic processes in the nascent endosperm and provides an efficient mechanism for glycolytic ATP synthesis in oxygen depleted tissues. May be involved in regulating the flux of carbon into starch and fatty acids of seeds and in the remobilization of nitrogen reserves in senescing leaves. The polypeptide is Pyruvate, phosphate dikinase 1, chloroplastic (PPDK1) (Oryza sativa subsp. japonica (Rice)).